A 121-amino-acid polypeptide reads, in one-letter code: Small ribosomal subunit protein uS13 (121 aa).

The segment at Gly-94–Lys-121 is disordered. Positions Ser-106 to Lys-121 are enriched in basic residues.

It belongs to the universal ribosomal protein uS13 family. Part of the 30S ribosomal subunit. Forms a loose heterodimer with protein S19. Forms two bridges to the 50S subunit in the 70S ribosome.

In terms of biological role, located at the top of the head of the 30S subunit, it contacts several helices of the 16S rRNA. In the 70S ribosome it contacts the 23S rRNA (bridge B1a) and protein L5 of the 50S subunit (bridge B1b), connecting the 2 subunits; these bridges are implicated in subunit movement. Contacts the tRNAs in the A and P-sites. This Halalkalibacterium halodurans (strain ATCC BAA-125 / DSM 18197 / FERM 7344 / JCM 9153 / C-125) (Bacillus halodurans) protein is Small ribosomal subunit protein uS13.